A 443-amino-acid chain; its full sequence is Amino-acid acetyltransferase (443 aa).

Residues 296-434 form the N-acetyltransferase domain; that stretch reads EQIRRATIND…KKLMYNYQRR (139 aa).

Belongs to the acetyltransferase family. ArgA subfamily. In terms of assembly, homohexamer.

It localises to the cytoplasm. It carries out the reaction L-glutamate + acetyl-CoA = N-acetyl-L-glutamate + CoA + H(+). Its pathway is amino-acid biosynthesis; L-arginine biosynthesis; N(2)-acetyl-L-ornithine from L-glutamate: step 1/4. The polypeptide is Amino-acid acetyltransferase (Escherichia fergusonii (strain ATCC 35469 / DSM 13698 / CCUG 18766 / IAM 14443 / JCM 21226 / LMG 7866 / NBRC 102419 / NCTC 12128 / CDC 0568-73)).